A 464-amino-acid polypeptide reads, in one-letter code: ATP synthase subunit beta (464 aa).

150-157 contributes to the ATP binding site; the sequence is GGAGVGKT.

This sequence belongs to the ATPase alpha/beta chains family. As to quaternary structure, F-type ATPases have 2 components, CF(1) - the catalytic core - and CF(0) - the membrane proton channel. CF(1) has five subunits: alpha(3), beta(3), gamma(1), delta(1), epsilon(1). CF(0) has three main subunits: a(1), b(2) and c(9-12). The alpha and beta chains form an alternating ring which encloses part of the gamma chain. CF(1) is attached to CF(0) by a central stalk formed by the gamma and epsilon chains, while a peripheral stalk is formed by the delta and b chains.

Its subcellular location is the cell membrane. It carries out the reaction ATP + H2O + 4 H(+)(in) = ADP + phosphate + 5 H(+)(out). In terms of biological role, produces ATP from ADP in the presence of a proton gradient across the membrane. The catalytic sites are hosted primarily by the beta subunits. The chain is ATP synthase subunit beta from Dehalococcoides mccartyi (strain ATCC BAA-2100 / JCM 16839 / KCTC 5957 / BAV1).